Consider the following 329-residue polypeptide: MSSKRVTWLSLTWVLVFLCLSVELEAQLQVGFYRTSCGLAEFIVKDEVRKGFIRDSGVAPGLVRMHFHDCFVRGCDGSVLIDSTPSNTAEKDSPANNPSLRGFEVIDSAKARLEAVCKGVVSCADIVAFAARDSVEITGGLGYDVPAGRRDGRISLASEASTNLPPPTFTVDQLTQFFSNKGLTQDEMVTLSGAHTIGRSHCSSFSNRLYNFNGTSGQDPTLDPQYAASLKTQCPQGSTNTNLVVPMNPSSPSITDVGYYVDVLRNRGLFTSDQTLLTDTTTATQVRQNAGNPFLWKNKFASAMVKMGQLGVLIGEAGQIRANCRVINS.

Positions 1–26 (MSSKRVTWLSLTWVLVFLCLSVELEA) are cleaved as a signal peptide. Position 27 is a pyrrolidone carboxylic acid (Q27). 4 cysteine pairs are disulfide-bonded: C37-C117, C70-C75, C123-C324, and C202-C234. The Proton acceptor role is filled by H68. Ca(2+) is bound by residues D69, V72, G74, D76, and S78. Position 165 (P165) interacts with substrate. Heme b is bound at residue H195. Residue T196 coordinates Ca(2+). N213 carries N-linked (GlcNAc...) asparagine glycosylation. Ca(2+)-binding residues include S251 and D256.

Belongs to the peroxidase family. Classical plant (class III) peroxidase subfamily. Heme b is required as a cofactor. It depends on Ca(2+) as a cofactor.

It is found in the secreted. It carries out the reaction 2 a phenolic donor + H2O2 = 2 a phenolic radical donor + 2 H2O. In terms of biological role, removal of H(2)O(2), oxidation of toxic reductants, biosynthesis and degradation of lignin, suberization, auxin catabolism, response to environmental stresses such as wounding, pathogen attack and oxidative stress. These functions might be dependent on each isozyme/isoform in each plant tissue. This is Peroxidase 5 from Vitis vinifera (Grape).